The primary structure comprises 376 residues: Succinyl-diaminopimelate desuccinylase (376 aa).

Residue His66 participates in Zn(2+) binding. Asp68 is a catalytic residue. Asp99 contributes to the Zn(2+) binding site. The active-site Proton acceptor is Glu133. Zn(2+) contacts are provided by Glu134, Glu162, and His349.

It belongs to the peptidase M20A family. DapE subfamily. Homodimer. Zn(2+) is required as a cofactor. Co(2+) serves as cofactor.

The enzyme catalyses N-succinyl-(2S,6S)-2,6-diaminopimelate + H2O = (2S,6S)-2,6-diaminopimelate + succinate. Its pathway is amino-acid biosynthesis; L-lysine biosynthesis via DAP pathway; LL-2,6-diaminopimelate from (S)-tetrahydrodipicolinate (succinylase route): step 3/3. Its function is as follows. Catalyzes the hydrolysis of N-succinyl-L,L-diaminopimelic acid (SDAP), forming succinate and LL-2,6-diaminopimelate (DAP), an intermediate involved in the bacterial biosynthesis of lysine and meso-diaminopimelic acid, an essential component of bacterial cell walls. This Buchnera aphidicola subsp. Cinara cedri (strain Cc) protein is Succinyl-diaminopimelate desuccinylase.